Reading from the N-terminus, the 214-residue chain is Thymidylate kinase (214 aa).

10–17 (GIDGCGKT) lines the ATP pocket.

This sequence belongs to the thymidylate kinase family.

It catalyses the reaction dTMP + ATP = dTDP + ADP. In terms of biological role, phosphorylation of dTMP to form dTDP in both de novo and salvage pathways of dTTP synthesis. This Prochlorococcus marinus subsp. pastoris (strain CCMP1986 / NIES-2087 / MED4) protein is Thymidylate kinase.